The chain runs to 845 residues: Proto-oncogene vav (845 aa).

The Calponin-homology (CH) domain maps to 1–119 (MELWRQCTHW…YTLSALSWTP (119 aa)). The DH domain maps to 194 to 373 (KRCCCLREIQ…RDLAQCVNEV (180 aa)). In terms of domain architecture, PH spans 402 to 504 (RPKIDGELKI…WMEQFEMAIS (103 aa)). The segment at 515–564 (GHDFQMFSFEETTSCKACQMLLRGTFYQGYRCHRCRASAHKECLGRVPPC) adopts a Phorbol-ester/DAG-type zinc-finger fold. Residues 592-660 (LGLPKMEVFQ…PCNRVKPYVH (69 aa)) form the SH3 1 domain. The 95-residue stretch at 671–765 (WYAGPMERAG…SLDTTLQFPF (95 aa)) folds into the SH2 domain. The region spanning 782 to 842 (KYFGTAKARY…PANYVEEDYS (61 aa)) is the SH3 2 domain. 2 positions are modified to phosphotyrosine: tyrosine 826 and tyrosine 844.

In terms of assembly, interacts with SHB. Interacts with SH2B2, GRB2, GRB3, DOCK2, SLA, TEC and ZNF655/VIK. Interacts with SIAH2; without leading to its degradation. Associates with BLNK, PLCG1, GRB2 and NCK1 in a B-cell antigen receptor-dependent fashion. Interacts with CBLB; which inhibits tyrosine phosphorylation and down-regulates activity. May interact with CCPG1. Interacts with CLNK. Interacts with THEMIS2. Interacts with NEK3 and this interaction is prolactin-dependent. Interacts with ITK. Interacts with PTK2B/PYK2. Interacts with HCK. Interacts with PTK2B/PYK2. Interacts (via SH2 domain) with SYK. Interacts with ANKRD54. Interacts with CD6. Interacts with isoform 2 of CRACR2A. Interacts with LCP2; this interaction plays a role in TCR-mediated cytokine production. In terms of processing, phosphorylated on tyrosine residues by HCK in response to IFNG and bacterial lipopolysaccharide (LPS). Phosphorylated by FYN. Widely expressed in hematopoietic cells but not in other cell types.

Functionally, couples tyrosine kinase signals with the activation of the Rho/Rac GTPases, thus leading to cell differentiation and/or proliferation. The protein is Proto-oncogene vav (VAV1) of Homo sapiens (Human).